A 685-amino-acid polypeptide reads, in one-letter code: Stromal interaction molecule 1 (685 aa).

An N-terminal signal peptide occupies residues 1–22; that stretch reads MDVCARLALWLLWGLLLHQGQS. Over 23 to 213 the chain is Extracellular; sequence LSHSHSEKNT…LLTRHNHLKD (191 aa). The segment at 24–43 is disordered; that stretch reads SHSHSEKNTGASSGATSEES. Residues 32 to 41 are compositionally biased toward low complexity; sequence TGASSGATSE. 2 EF-hand domains span residues 64–97 and 102–126; these read SFEA…EDLN and TVKH…AWKS. Positions 76, 78, 80, 82, and 87 each coordinate Ca(2+). Residues asparagine 131 and asparagine 171 are each glycosylated (N-linked (GlcNAc...) asparagine). One can recognise an SAM domain in the interval 132-200; the sequence is WTVDEVIQWL…QLKALDTVLF (69 aa). Residues 214–234 traverse the membrane as a helical segment; the sequence is FMLVVSIVIGVGGCWFAYIQN. Over 235–685 the chain is Cytoplasmic; that stretch reads RYSKEHMKKM…LKIFKKPLKK (451 aa). Positions 248–442 form a coiled coil; sequence LEGLHRAEQS…IEILCGFQIV (195 aa). Serine 257 bears the Phosphoserine mark. The segment at 344-442 is SOAR/CAD; sequence PEALQKWLQL…IEILCGFQIV (99 aa). The tract at residues 475-483 is contributes to fast Ca(2+)-dependent inactivation of CRAC channels; that stretch reads DDVDDMDEE. Residues 490–499 are compositionally biased toward low complexity; that stretch reads MQSPSLQSSV. Positions 490 to 541 are disordered; that stretch reads MQSPSLQSSVRQRLTEPQLGLGSQRDLTHSDSESSLHMSDRQRVAPKPPQMG. Position 504 is a phosphothreonine (threonine 504). A Phosphoserine modification is found at serine 512. A compositionally biased stretch (basic and acidic residues) spans 515–532; sequence DLTHSDSESSLHMSDRQR. A Phosphothreonine modification is found at threonine 517. Residues serine 519, serine 521, serine 523, serine 524, serine 567, serine 575, serine 602, serine 608, serine 618, serine 621, and serine 628 each carry the phosphoserine modification. Positions 596–685 are disordered; the sequence is LMELNPSVPP…LKIFKKPLKK (90 aa). Residues 608 to 620 show a composition bias toward low complexity; the sequence is SPLLDSSHSLSPS. The Microtubule tip localization signal motif lies at 642–645; the sequence is TRIP. The segment covering 655-666 has biased composition (acidic residues); it reads EEDNGSIGEETD. Serine 660 carries the phosphoserine modification. At threonine 665 the chain carries Phosphothreonine. Phosphoserine is present on serine 668. A compositionally biased stretch (basic residues) spans 670–685; that stretch reads GRKKFPLKIFKKPLKK. The tract at residues 672–685 is required for generation of inwardly rectifying CRAC currents; that stretch reads KKFPLKIFKKPLKK.

In terms of assembly, monomer in the presence of Ca(2+). It oligomerizes in absence of Ca(2+). Forms homooligomers and heterooligomers with STIM2. Interacts with pore-forming subunits of CRAC channels, ORAI1, ORAI2 and ORAI3; this interaction is potentiated upon Ca(2+) store depletion. Interacts (via the transmembrane region and the SOAR/CAD domain) with SPPL3; the interaction promotes the binding of STIM1 to ORAI1. Interacts with ORAI1. Interacts with MAPRE1; probably required for targeting to the growing microtubule plus ends. Interacts with CRACR2A/EFCAB4B; the interaction is direct and takes place in absence of Ca(2+). Forms a complex with CRACR2A/EFCAB4B and ORAI1 at low concentration of Ca(2+), the complex dissociates at elevated Ca(2+) concentrations. Interacts with SARAF, promoting a slow inactivation of STIM1-dependent SOCE activity, possibly by facilitating the deoligomerization of STIM1. Interacts with EFHB; the interaction takes place upon Ca(2+)-store depletion and inhibits the association with SARAF. Interacts with ASPH. Interacts with SLC35G1; intracellular Ca(2+)-dependent. May interact with ATP1A1, ATP2A2, ATP2B1, ATP2B4, KPNB1 and XPO1; through SLC35G1. Interacts with STIMATE, promoting STIM1 conformational switch. Interacts with TMEM178A. Interacts with CASQ1 (via C-terminal end and preferentially with the monomeric form); this interaction increases in response to a depletion of intracellular Ca(2+), decreases both STIM1 aggregation and clustering, interaction of STIM1 with ORAI1 and store-operated Ca(2+) entry (SOCE) activity. Interacts with ADCY8. Interacts with TMEM203. Glycosylation is required for cell surface expression. Post-translationally, phosphorylated predominantly on Ser residues. Expressed in maturation-stage ameloblasts (at protein level). Expressed in all tissues examined and in many cell types, including bone marrow stroma, fibroblast, B-cell precursors, lymphoma and erythroleukemia.

It localises to the cell membrane. The protein localises to the endoplasmic reticulum membrane. Its subcellular location is the sarcoplasmic reticulum. The protein resides in the cytoplasm. It is found in the cytoskeleton. Functionally, acts as a Ca(2+) sensor that gates two major inward rectifying Ca(2+) channels at the plasma membrane: Ca(2+) release-activated Ca(2+) (CRAC) channels and arachidonate-regulated Ca(2+)-selective (ARC) channels. Plays a role in mediating store-operated Ca(2+) entry (SOCE), a Ca(2+) influx following depletion of intracellular Ca(2+) stores. Upon Ca(2+) depletion, translocates from the endoplasmic reticulum to the plasma membrane where it activates CRAC channel pore-forming subunits ORA1, ORA2 and ORAI3 to generate sustained and oscillatory Ca(2+) entry. Involved in enamel formation. This Mus musculus (Mouse) protein is Stromal interaction molecule 1 (Stim1).